The sequence spans 557 residues: 2-succinyl-5-enolpyruvyl-6-hydroxy-3-cyclohexene-1-carboxylate synthase (557 aa).

The protein belongs to the TPP enzyme family. MenD subfamily. In terms of assembly, homodimer. Mg(2+) is required as a cofactor. Requires Mn(2+) as cofactor. It depends on thiamine diphosphate as a cofactor.

It carries out the reaction isochorismate + 2-oxoglutarate + H(+) = 5-enolpyruvoyl-6-hydroxy-2-succinyl-cyclohex-3-ene-1-carboxylate + CO2. It participates in quinol/quinone metabolism; 1,4-dihydroxy-2-naphthoate biosynthesis; 1,4-dihydroxy-2-naphthoate from chorismate: step 2/7. Its pathway is quinol/quinone metabolism; menaquinone biosynthesis. Its function is as follows. Catalyzes the thiamine diphosphate-dependent decarboxylation of 2-oxoglutarate and the subsequent addition of the resulting succinic semialdehyde-thiamine pyrophosphate anion to isochorismate to yield 2-succinyl-5-enolpyruvyl-6-hydroxy-3-cyclohexene-1-carboxylate (SEPHCHC). In Yersinia enterocolitica serotype O:8 / biotype 1B (strain NCTC 13174 / 8081), this protein is 2-succinyl-5-enolpyruvyl-6-hydroxy-3-cyclohexene-1-carboxylate synthase.